We begin with the raw amino-acid sequence, 33 residues long: uncharacterized protein (33 aa).

The protein localises to the cytoplasm. The protein resides in the nucleus. This is an uncharacterized protein from Schizosaccharomyces pombe (strain 972 / ATCC 24843) (Fission yeast).